The chain runs to 57 residues: uncharacterized protein (57 aa).

Positions 1–20 are cleaved as a signal peptide; sequence MKKLALILFMGTLVSFYADA.

This is an uncharacterized protein from Escherichia coli (strain K12).